The primary structure comprises 740 residues: Ribulose bisphosphate carboxylase, chloroplastic (740 aa).

The N-terminal 55 residues, 1–55, are a transit peptide targeting the chloroplast; the sequence is MPSSSFTTGLALGAGALVGANAFVAPTAKTTNLRAPTQEASLQVAASQQTEQPAP. The helical transmembrane segment at 56 to 76 threads the bilayer; that stretch reads STSALPWAFGAGACLALAAGG. A substrate-binding site is contributed by Asn213. Lys268 functions as the Proton acceptor in the catalytic mechanism. Lys270 provides a ligand contact to substrate. Mg(2+) contacts are provided by Lys293, Asp295, and Glu296. Lys293 bears the N6-carboxylysine mark. His389 acts as the Proton acceptor in catalysis. The substrate site is built by Arg390, His423, and Ser470.

This sequence belongs to the RuBisCO large chain family. Type II subfamily. Homodimer. Mg(2+) serves as cofactor.

The protein localises to the plastid. Its subcellular location is the chloroplast membrane. It catalyses the reaction 2 (2R)-3-phosphoglycerate + 2 H(+) = D-ribulose 1,5-bisphosphate + CO2 + H2O. The enzyme catalyses D-ribulose 1,5-bisphosphate + O2 = 2-phosphoglycolate + (2R)-3-phosphoglycerate + 2 H(+). In terms of biological role, ruBisCO catalyzes two reactions: the carboxylation of D-ribulose 1,5-bisphosphate, the primary event in carbon dioxide fixation, as well as the oxidative fragmentation of the pentose substrate. Both reactions occur simultaneously and in competition at the same active site. The protein is Ribulose bisphosphate carboxylase, chloroplastic (rbcL) of Heterocapsa triquetra (Dinoflagellate).